We begin with the raw amino-acid sequence, 210 residues long: 7-carboxy-7-deazaguanine synthase (210 aa).

Residues 25 to 27 (IQG) and Arg-40 each bind substrate. Positions 31–210 (HTGTAAYFIR…LQTHKYLNIP (180 aa)) constitute a Radical SAM core domain. Positions 44, 48, and 51 each coordinate [4Fe-4S] cluster. A substrate-binding site is contributed by Thr-84. S-adenosyl-L-methionine contacts are provided by residues Gly-86 and 127–129 (SPK). Residue Pro-210 coordinates substrate.

It belongs to the radical SAM superfamily. 7-carboxy-7-deazaguanine synthase family. In terms of assembly, homodimer. It depends on [4Fe-4S] cluster as a cofactor. S-adenosyl-L-methionine is required as a cofactor. The cofactor is Mg(2+).

It carries out the reaction 6-carboxy-5,6,7,8-tetrahydropterin + H(+) = 7-carboxy-7-deazaguanine + NH4(+). The protein operates within purine metabolism; 7-cyano-7-deazaguanine biosynthesis. Catalyzes the complex heterocyclic radical-mediated conversion of 6-carboxy-5,6,7,8-tetrahydropterin (CPH4) to 7-carboxy-7-deazaguanine (CDG), a step common to the biosynthetic pathways of all 7-deazapurine-containing compounds. This Flavobacterium psychrophilum (strain ATCC 49511 / DSM 21280 / CIP 103535 / JIP02/86) protein is 7-carboxy-7-deazaguanine synthase.